The following is a 786-amino-acid chain: MIFTKSLINPFVHLSAIPTQRIYKTLNDIGLEVDSFHSLRAPDRVVVGKVLECEKHPDADKLNVCQVDIGEERRQIVCGAKNVAAGQWVAVALEGAKISDTLTIKKAKLRGIESQGMICSSSELGFPKLNEGIMILDSSIGELKLGKPLHEYPLFSDDIFEIDITPNRGDCLSLYGVARELAAAYDLDFSEYPKEQEEDNVLGIGRLLQVSHEGKLDSSLLYKTVQLNELKLPLSIALTLAYNDLLGESVLQNFIQYATLVSGVSIKAYRHDACLPASTSDEKPLKASIMIKKDENGLESVYAGEKKLSTIGVSQNRETMPLDAPEVVILEASYTPPAIISEGVARSKVEKETRFFYRASRGSNPHLPSGITLLCSALHKMGGALIYSGTHEITQNYKPATITVDLHSLSAFIGQEVPKTKVVSLLKSLKFEVDLASDDSFLAIRPPLFRHDIHNKQDIAEEIVRLLGIDTILAKPLYFAEKRRTDEEYILYKHHRSLAKRAMVAGFNETIHFVFNQKSRLKEWGYTTIDESVDLLNPITSELDTLRPTLLLSLLDSVVRNKNLGYSQIALFEMGSTYTAARQERFSLAFVASGLKKEAIYPYPKGEKWSLFGFAEEIASVIGEFSLEQRAPQSEKLFHPAQCAYIIQKGERIGTIAKLHPLAQEAFDLEETFVAEIDLEALKPSLIQAQSFSKFPKLQRDLTVLIGKNHPFSALRQEIKKLGIIEIKELFPLDIYTDEKIDEEQISLTIRLLIQSDSKTLEEEEIVSITQKVLDLLNHRFGAKLR.

One can recognise a tRNA-binding domain in the interval 39-150 (LRAPDRVVVG…GELKLGKPLH (112 aa)). A B5 domain is found at 397–474 (YKPATITVDL…RLLGIDTILA (78 aa)). 4 residues coordinate Mg(2+): Asp-452, Asp-458, Glu-461, and Glu-462. Residues 693–786 (SKFPKLQRDL…LNHRFGAKLR (94 aa)) enclose the FDX-ACB domain.

This sequence belongs to the phenylalanyl-tRNA synthetase beta subunit family. Type 1 subfamily. In terms of assembly, tetramer of two alpha and two beta subunits. Mg(2+) serves as cofactor.

It is found in the cytoplasm. It catalyses the reaction tRNA(Phe) + L-phenylalanine + ATP = L-phenylalanyl-tRNA(Phe) + AMP + diphosphate + H(+). This is Phenylalanine--tRNA ligase beta subunit from Wolinella succinogenes (strain ATCC 29543 / DSM 1740 / CCUG 13145 / JCM 31913 / LMG 7466 / NCTC 11488 / FDC 602W) (Vibrio succinogenes).